The chain runs to 785 residues: Putative endonuclease MutS2 (785 aa).

An ATP-binding site is contributed by 335-342 (GPNTGGKT). The stretch at 513–586 (TAEHNEVDTM…AEKVKAAMKE (74 aa)) forms a coiled coil. The segment at 636-785 (KRDFKPGDEV…GSGVTVVELK (150 aa)) is partially complements a deletion for mitomycin C (MMC) resistance and for chromosomal DNA transformation. The tract at residues 641-681 (PGDEVKVLTFGQKGTLLEKTGGNEWNVQIGILKMKVKEKDL) is KOW region. The 76-residue stretch at 710–785 (LDLRGERYEN…GSGVTVVELK (76 aa)) folds into the Smr domain.

Belongs to the DNA mismatch repair MutS family. MutS2 subfamily. As to quaternary structure, binds to ribosomes as a homodimer. Binds to stalled/collided disomes, association is greater in (ribosome-targeted) antibiotic-treated cells (with increased stalling at specific mRNA sites). The clamp domain of one monomer binds the A-site finger, the 23S rRNA of the central protuberance and ribosomal protein uL5 of the leading (stalled) ribosome, while the other monomer binds in a gap between the ribosomal central protuberance and the L1 stalk of the leading ribosome.

The protein resides in the cytoplasm. Its function is as follows. Acts as a ribosome collision sensor splitting the ribosome into its 2 subunits. Detects stalled/collided disomes (pairs of ribosomes where the leading ribosome is stalled and a second ribosome has collided with it) which it binds and splits, by an ATP-hydrolysis driven conformational change. Does not seem to have endoribonuclease activity (in the context of ribosome stalling). Acts upstream of the ribosome quality control system (RQC), a ribosome-associated complex that mediates the extraction of incompletely synthesized nascent chains from stalled ribosomes and their subsequent degradation, probably generates substrates for RQC. Functionally, does not seem to be involved in mismatch repair or in the prevention of interspecific recombination during DNA transformation. Might be involved in homologous recombination. Putative endonuclease that may be involved in the suppression of homologous recombination and may therefore have a key role in the control of bacterial genetic diversity. The sequence is that of Putative endonuclease MutS2 from Bacillus subtilis (strain 168).